The sequence spans 310 residues: Homoserine kinase (310 aa).

Residue 95-105 (PQSRGLGSSAA) participates in ATP binding.

This sequence belongs to the GHMP kinase family. Homoserine kinase subfamily.

The protein localises to the cytoplasm. The enzyme catalyses L-homoserine + ATP = O-phospho-L-homoserine + ADP + H(+). The protein operates within amino-acid biosynthesis; L-threonine biosynthesis; L-threonine from L-aspartate: step 4/5. Its function is as follows. Catalyzes the ATP-dependent phosphorylation of L-homoserine to L-homoserine phosphate. The polypeptide is Homoserine kinase (Corynebacterium kroppenstedtii (strain DSM 44385 / JCM 11950 / CIP 105744 / CCUG 35717)).